Consider the following 277-residue polypeptide: Tetrahydroxynaphthalene reductase PfmaG (277 aa).

NADP(+)-binding residues include I36, D82, and N109. Active-site proton donor residues include S158, S159, and Y173. Y173, K177, I206, and T208 together coordinate NADP(+). The Lowers pKa of active site Tyr role is filled by K177.

Belongs to the short-chain dehydrogenases/reductases (SDR) family.

It catalyses the reaction scytalone + NADP(+) = naphthalene-1,3,6,8-tetrol + NADPH + H(+). It participates in pigment biosynthesis; melanin biosynthesis. In terms of biological role, tetrahydroxynaphthalene reductase; part of the gene cluster that mediates the biosynthesis of dihydroxynaphthalene (DHN)-melanin, a bluish-green pigment forming a dark layer in the conidial wall that protects the conidia from UV radiations. The first step of the pathway is the production of the pentaketide 1,3,6,8-tetrahydroxynaphthalene (1,3,6,8-THN or T4HN) by the polyketide synthase PfmaE though condensation of acetyl-CoA with malonyl-CoA. T4HN is not stable and easily oxidizes into the stable form flaviolin. T4HN is also substrate of the hydroxynaphthalene reductase PfmaG to yield scytalone. The scytalone dehydratase PfmaJ then reduces scytalone to 1,3,8-THN. 1,3,8-THN is then substrate of the hydroxynaphthalene reductase PfmaI to yield vermelone. Vermelone is further converted by the multicopper oxidase PfmaD to 1,8-DHN. Finally the laccase PFICI_06862 transforms 1,8-DHN to DHN-melanin. The roles of the 5-oxoprolinase PfmaA and the proline iminopeptidase PfmaB within the cluster have not been elucidated yet. This is Tetrahydroxynaphthalene reductase PfmaG from Pestalotiopsis fici (strain W106-1 / CGMCC3.15140).